Here is a 267-residue protein sequence, read N- to C-terminus: MEMO1 family protein MM_1761 (267 aa).

This sequence belongs to the MEMO1 family.

This is MEMO1 family protein MM_1761 from Methanosarcina mazei (strain ATCC BAA-159 / DSM 3647 / Goe1 / Go1 / JCM 11833 / OCM 88) (Methanosarcina frisia).